The primary structure comprises 288 residues: Nucleotide-binding protein Mlg_2233 (288 aa).

Gly-11–Ser-18 serves as a coordination point for ATP. Asp-63–Asn-66 contributes to the GTP binding site.

Belongs to the RapZ-like family.

Displays ATPase and GTPase activities. This is Nucleotide-binding protein Mlg_2233 from Alkalilimnicola ehrlichii (strain ATCC BAA-1101 / DSM 17681 / MLHE-1).